The sequence spans 288 residues: Putative branched-chain-amino-acid aminotransferase (288 aa).

The residue at position 146 (lysine 146) is an N6-(pyridoxal phosphate)lysine.

The protein belongs to the class-IV pyridoxal-phosphate-dependent aminotransferase family. Pyridoxal 5'-phosphate is required as a cofactor.

It carries out the reaction L-leucine + 2-oxoglutarate = 4-methyl-2-oxopentanoate + L-glutamate. The catalysed reaction is L-isoleucine + 2-oxoglutarate = (S)-3-methyl-2-oxopentanoate + L-glutamate. The enzyme catalyses L-valine + 2-oxoglutarate = 3-methyl-2-oxobutanoate + L-glutamate. The protein operates within amino-acid biosynthesis; L-isoleucine biosynthesis; L-isoleucine from 2-oxobutanoate: step 4/4. It functions in the pathway amino-acid biosynthesis; L-leucine biosynthesis; L-leucine from 3-methyl-2-oxobutanoate: step 4/4. Its pathway is amino-acid biosynthesis; L-valine biosynthesis; L-valine from pyruvate: step 4/4. Its function is as follows. Acts on leucine, isoleucine and valine. This chain is Putative branched-chain-amino-acid aminotransferase (ilvE), found in Methanocaldococcus jannaschii (strain ATCC 43067 / DSM 2661 / JAL-1 / JCM 10045 / NBRC 100440) (Methanococcus jannaschii).